Reading from the N-terminus, the 257-residue chain is UPF0246 protein Rsph17025_0016 (257 aa).

This sequence belongs to the UPF0246 family.

This chain is UPF0246 protein Rsph17025_0016, found in Cereibacter sphaeroides (strain ATCC 17025 / ATH 2.4.3) (Rhodobacter sphaeroides).